A 299-amino-acid polypeptide reads, in one-letter code: Regucalcin (299 aa).

Residue Glu18 participates in a divalent metal cation binding. 3 residues coordinate substrate: Arg101, Asn103, and Glu121. Residues Asn154 and Asp204 each contribute to the a divalent metal cation site. Asp204 functions as the Proton donor/acceptor in the catalytic mechanism. Residues Lys244 and Lys253 each carry the N6-succinyllysine modification.

The protein belongs to the SMP-30/CGR1 family. In terms of assembly, monomer. The cofactor is Zn(2+). Mn(2+) serves as cofactor. Requires Ca(2+) as cofactor. It depends on Mg(2+) as a cofactor.

It localises to the cytoplasm. The enzyme catalyses D-glucono-1,5-lactone + H2O = D-gluconate + H(+). It functions in the pathway cofactor biosynthesis; L-ascorbate biosynthesis via UDP-alpha-D-glucuronate pathway; L-ascorbate from UDP-alpha-D-glucuronate: step 3/4. Gluconolactonase with low activity towards other sugar lactones, including gulonolactone and galactonolactone. Catalyzes a key step in ascorbic acid (vitamin C) biosynthesis. Can also hydrolyze diisopropyl phosphorofluoridate and phenylacetate (in vitro). Calcium-binding protein. Modulates Ca(2+) signaling, and Ca(2+)-dependent cellular processes and enzyme activities. The chain is Regucalcin (RGN) from Sus scrofa (Pig).